A 363-amino-acid chain; its full sequence is NAD(P)H-quinone oxidoreductase subunit 1, chloroplastic (363 aa).

Helical transmembrane passes span 27-47 (VWLL…VLVI), 104-124 (IAVI…HLVL), 127-147 (LSIG…GLLM), 248-268 (YSGI…LVSS), 300-320 (VFGM…FLFI), and 343-363 (FLLP…LFSL).

The protein belongs to the complex I subunit 1 family. As to quaternary structure, NDH is composed of at least 16 different subunits, 5 of which are encoded in the nucleus.

It is found in the plastid. The protein resides in the chloroplast thylakoid membrane. It carries out the reaction a plastoquinone + NADH + (n+1) H(+)(in) = a plastoquinol + NAD(+) + n H(+)(out). The catalysed reaction is a plastoquinone + NADPH + (n+1) H(+)(in) = a plastoquinol + NADP(+) + n H(+)(out). Functionally, NDH shuttles electrons from NAD(P)H:plastoquinone, via FMN and iron-sulfur (Fe-S) centers, to quinones in the photosynthetic chain and possibly in a chloroplast respiratory chain. The immediate electron acceptor for the enzyme in this species is believed to be plastoquinone. Couples the redox reaction to proton translocation, and thus conserves the redox energy in a proton gradient. This Ranunculus macranthus (Large buttercup) protein is NAD(P)H-quinone oxidoreductase subunit 1, chloroplastic.